Here is a 125-residue protein sequence, read N- to C-terminus: Small ribosomal subunit protein uS13 (125 aa).

The protein belongs to the universal ribosomal protein uS13 family. Part of the 30S ribosomal subunit. Forms a loose heterodimer with protein S19. Forms two bridges to the 50S subunit in the 70S ribosome.

In terms of biological role, located at the top of the head of the 30S subunit, it contacts several helices of the 16S rRNA. In the 70S ribosome it contacts the 23S rRNA (bridge B1a) and protein L5 of the 50S subunit (bridge B1b), connecting the 2 subunits; these bridges are implicated in subunit movement. Contacts the tRNAs in the A and P-sites. This Orientia tsutsugamushi (strain Boryong) (Rickettsia tsutsugamushi) protein is Small ribosomal subunit protein uS13.